A 131-amino-acid polypeptide reads, in one-letter code: Small ribosomal subunit protein uS12c (131 aa).

Belongs to the universal ribosomal protein uS12 family. In terms of assembly, part of the 30S ribosomal subunit.

It is found in the plastid. The protein resides in the chloroplast. With S4 and S5 plays an important role in translational accuracy. Located at the interface of the 30S and 50S subunits. This is Small ribosomal subunit protein uS12c (rps12) from Stigeoclonium helveticum (Green alga).